A 206-amino-acid polypeptide reads, in one-letter code: dITP/XTP pyrophosphatase (206 aa).

Position 7–12 (7–12) interacts with substrate; that stretch reads SCHGYK. D70 (proton acceptor) is an active-site residue. Residue D70 coordinates Mg(2+). Substrate-binding positions include T71, 154–157, K177, and 182–183; these read FGYD and HR.

This sequence belongs to the HAM1 NTPase family. In terms of assembly, homodimer. Mg(2+) is required as a cofactor.

It catalyses the reaction XTP + H2O = XMP + diphosphate + H(+). The catalysed reaction is dITP + H2O = dIMP + diphosphate + H(+). It carries out the reaction ITP + H2O = IMP + diphosphate + H(+). Functionally, pyrophosphatase that catalyzes the hydrolysis of nucleoside triphosphates to their monophosphate derivatives, with a high preference for the non-canonical purine nucleotides XTP (xanthosine triphosphate), dITP (deoxyinosine triphosphate) and ITP. Seems to function as a house-cleaning enzyme that removes non-canonical purine nucleotides from the nucleotide pool, thus preventing their incorporation into DNA/RNA and avoiding chromosomal lesions. This Chlamydia caviae (strain ATCC VR-813 / DSM 19441 / 03DC25 / GPIC) (Chlamydophila caviae) protein is dITP/XTP pyrophosphatase.